We begin with the raw amino-acid sequence, 103 residues long: Large ribosomal subunit protein bL21 (103 aa).

Belongs to the bacterial ribosomal protein bL21 family. As to quaternary structure, part of the 50S ribosomal subunit. Contacts protein L20.

Its function is as follows. This protein binds to 23S rRNA in the presence of protein L20. The chain is Large ribosomal subunit protein bL21 from Desulfotalea psychrophila (strain LSv54 / DSM 12343).